Reading from the N-terminus, the 611-residue chain is Elongation factor 4 (611 aa).

The tr-type G domain occupies 11–193 (EKIRNFSIIA…QVVEYVPAPS (183 aa)). Residues 23-28 (DHGKST) and 140-143 (NKID) contribute to the GTP site.

The protein belongs to the TRAFAC class translation factor GTPase superfamily. Classic translation factor GTPase family. LepA subfamily.

The protein localises to the cell membrane. The catalysed reaction is GTP + H2O = GDP + phosphate + H(+). Required for accurate and efficient protein synthesis under certain stress conditions. May act as a fidelity factor of the translation reaction, by catalyzing a one-codon backward translocation of tRNAs on improperly translocated ribosomes. Back-translocation proceeds from a post-translocation (POST) complex to a pre-translocation (PRE) complex, thus giving elongation factor G a second chance to translocate the tRNAs correctly. Binds to ribosomes in a GTP-dependent manner. This chain is Elongation factor 4, found in Enterococcus faecalis (strain ATCC 700802 / V583).